Reading from the N-terminus, the 916-residue chain is Protein translocase subunit SecA (916 aa).

Residues Gln-88, Gly-106–Thr-110, and Asp-519 contribute to the ATP site. Residues Cys-902, Cys-904, Cys-913, and Cys-914 each contribute to the Zn(2+) site.

This sequence belongs to the SecA family. As to quaternary structure, monomer and homodimer. Part of the essential Sec protein translocation apparatus which comprises SecA, SecYEG and auxiliary proteins SecDF. Other proteins may also be involved. Zn(2+) is required as a cofactor.

The protein resides in the cell inner membrane. It is found in the cytoplasm. It carries out the reaction ATP + H2O + cellular proteinSide 1 = ADP + phosphate + cellular proteinSide 2.. Its function is as follows. Part of the Sec protein translocase complex. Interacts with the SecYEG preprotein conducting channel. Has a central role in coupling the hydrolysis of ATP to the transfer of proteins into and across the cell membrane, serving as an ATP-driven molecular motor driving the stepwise translocation of polypeptide chains across the membrane. This chain is Protein translocase subunit SecA, found in Treponema pallidum (strain Nichols).